The primary structure comprises 500 residues: Glucose-6-phosphate 1-dehydrogenase (500 aa).

NADP(+)-binding positions include 18–25 (GASGDLSK), R52, and K155. Residues K155, 185 to 189 (HYLGK), E223, and D242 each bind D-glucose 6-phosphate. Residue H247 is the Proton acceptor of the active site. NADP(+) is bound at residue K338. K341 serves as a coordination point for D-glucose 6-phosphate. The NADP(+) site is built by K347, R351, and R373. Q375 provides a ligand contact to D-glucose 6-phosphate. NADP(+) contacts are provided by residues 381-383 (YFK), 401-403 (DLT), and Y483.

It belongs to the glucose-6-phosphate dehydrogenase family.

It localises to the cytoplasm. The protein resides in the cytosol. It catalyses the reaction D-glucose 6-phosphate + NADP(+) = 6-phospho-D-glucono-1,5-lactone + NADPH + H(+). It participates in carbohydrate degradation; pentose phosphate pathway; D-ribulose 5-phosphate from D-glucose 6-phosphate (oxidative stage): step 1/3. Functionally, catalyzes the rate-limiting step of the oxidative pentose-phosphate pathway, which represents a route for the dissimilation of carbohydrates besides glycolysis. The main function of this enzyme is to provide reducing power (NADPH) and pentose phosphates for fatty acid and nucleic acid synthesis. The protein is Glucose-6-phosphate 1-dehydrogenase of Schizosaccharomyces pombe (strain 972 / ATCC 24843) (Fission yeast).